The sequence spans 322 residues: Hydroxypyruvate reductase (322 aa).

Residues Arg-160–Ile-161, Asp-180, Cys-211–Pro-212, Asn-238–Arg-240, and Asp-264 contribute to the NAD(+) site. Arg-240 is an active-site residue. The active site involves Glu-269. Residue His-288 is the Proton donor of the active site.

It belongs to the D-isomer specific 2-hydroxyacid dehydrogenase family.

It carries out the reaction (R)-glycerate + NAD(+) = 3-hydroxypyruvate + NADH + H(+). It functions in the pathway carbohydrate metabolism. Involved in catabolism of D-apiose. Catalyzes the reduction of 3-hydroxypyruvate to glycerate. This is Hydroxypyruvate reductase from Blautia hydrogenotrophica (strain DSM 10507 / JCM 14656 / S5a33) (Ruminococcus hydrogenotrophicus).